A 158-amino-acid polypeptide reads, in one-letter code: Glycine/sarcosine/betaine reductase complex component A (158 aa).

Sec-44 is an active-site residue. Residue Sec-44 is a non-standard amino acid, selenocysteine.

It belongs to the GrdA family. In terms of assembly, monomer. Component of the glycine, sarcosine and betaine reductase complexes, together with components B and C.

The enzyme catalyses acetyl phosphate + [thioredoxin]-disulfide + NH4(+) + H2O = [thioredoxin]-dithiol + glycine + phosphate + H(+). It catalyses the reaction acetyl phosphate + methylamine + [thioredoxin]-disulfide + H2O = sarcosine + [thioredoxin]-dithiol + phosphate + H(+). The catalysed reaction is acetyl phosphate + trimethylamine + [thioredoxin]-disulfide + H2O = glycine betaine + [thioredoxin]-dithiol + phosphate + H(+). In the first step of glycine, betaine and sarcosine reductases, the substrate is bound to component PB via a Schiff base intermediate. Then the PB-activated substrate is nucleophilically attacked by the selenol anion of component PA to transform it to a carboxymethylated selenoether and the respective amine. By action of component PC, acetyl phosphate is formed, leaving component PA in its oxidized state. Finally component PA becomes reduced by the thioredoxin system to start a new catalytic cycle of reductive deamination. This chain is Glycine/sarcosine/betaine reductase complex component A, found in Alkaliphilus metalliredigens (strain QYMF).